The sequence spans 80 residues: RNA-binding protein Hfq (80 aa).

Residues 10 to 70 form the Sm domain; the sequence is DLFLNTVRKQ…ISTIMPGQPM (61 aa).

It belongs to the Hfq family. In terms of assembly, homohexamer.

Its function is as follows. RNA chaperone that binds small regulatory RNA (sRNAs) and mRNAs to facilitate mRNA translational regulation in response to envelope stress, environmental stress and changes in metabolite concentrations. Also binds with high specificity to tRNAs. The polypeptide is RNA-binding protein Hfq (Rhizobium rhizogenes (strain K84 / ATCC BAA-868) (Agrobacterium radiobacter)).